Reading from the N-terminus, the 207-residue chain is RNA chaperone ProQ (207 aa).

Residues 100 to 156 (TLAESKAKVQARRKEQAQKARDEEKSKPKTKKAPQQRRANKPQAQKPAKQPVETRAL) form a disordered region. Residues 111-126 (RRKEQAQKARDEEKSK) are compositionally biased toward basic and acidic residues. Over residues 127-139 (PKTKKAPQQRRAN) the composition is skewed to basic residues.

It belongs to the ProQ family.

Its subcellular location is the cytoplasm. Its function is as follows. RNA chaperone with significant RNA binding, RNA strand exchange and RNA duplexing activities. The polypeptide is RNA chaperone ProQ (Vibrio vulnificus (strain CMCP6)).